A 565-amino-acid polypeptide reads, in one-letter code: Thiol:disulfide interchange protein DsbD (565 aa).

The signal sequence occupies residues 1 to 19; sequence MAQRIFTLILLLCSTSVFA. 2 cysteine pairs are disulfide-bonded: C122–C128 and C182–C304. 7 consecutive transmembrane segments (helical) span residues 163–183, 208–228, 243–263, 296–316, 323–343, 357–377, and 384–404; these read LPFS…TPCV, LLTF…GLVV, YVLI…FGLF, IAGL…LLYI, WLGG…LMLI, WMEQ…VFLL, and VWGL…AFIT. A Thioredoxin domain is found at 434 to 565; sequence WAFGATHTAQ…FSAHLRDRQP (132 aa). An intrachain disulfide couples C480 to C483.

It belongs to the thioredoxin family. DsbD subfamily.

Its subcellular location is the cell inner membrane. It carries out the reaction [protein]-dithiol + NAD(+) = [protein]-disulfide + NADH + H(+). It catalyses the reaction [protein]-dithiol + NADP(+) = [protein]-disulfide + NADPH + H(+). Required to facilitate the formation of correct disulfide bonds in some periplasmic proteins and for the assembly of the periplasmic c-type cytochromes. Acts by transferring electrons from cytoplasmic thioredoxin to the periplasm. This transfer involves a cascade of disulfide bond formation and reduction steps. In Shigella flexneri serotype 5b (strain 8401), this protein is Thiol:disulfide interchange protein DsbD.